The sequence spans 95 residues: Hiracin-JM79 immunity factor (95 aa).

In terms of biological role, imparts immunity to bacteriocin hiracin-JM79 to naturally sensitive host strains. This chain is Hiracin-JM79 immunity factor, found in Enterococcus hirae.